Reading from the N-terminus, the 293-residue chain is Bifunctional protein FolD (293 aa).

NADP(+) is bound by residues 165–167, Thr-194, and Val-235; that span reads GRS.

Belongs to the tetrahydrofolate dehydrogenase/cyclohydrolase family. Homodimer.

It catalyses the reaction (6R)-5,10-methylene-5,6,7,8-tetrahydrofolate + NADP(+) = (6R)-5,10-methenyltetrahydrofolate + NADPH. The enzyme catalyses (6R)-5,10-methenyltetrahydrofolate + H2O = (6R)-10-formyltetrahydrofolate + H(+). Its pathway is one-carbon metabolism; tetrahydrofolate interconversion. Catalyzes the oxidation of 5,10-methylenetetrahydrofolate to 5,10-methenyltetrahydrofolate and then the hydrolysis of 5,10-methenyltetrahydrofolate to 10-formyltetrahydrofolate. This is Bifunctional protein FolD from Syntrophus aciditrophicus (strain SB).